A 343-amino-acid chain; its full sequence is MLLLKKHTEDISSVYEIRERLGSGAFSEVVLAQERGSAHLVALKCIPKKALRGKEALVENEIAVLRRISHPNIVALEDVHESPSHLYLAMELVTGGELFDRIMERGSYTEKDASHLVGQVLGAVSYLHSLGIVHRDLKPENLLYATPFEDSKIMVSDFGLSKIQAGNMLGTACGTPGYVAPELLEQKPYGKAVDVWALGVISYILLCGYPPFYDESDPELFSQILRASYEFDSPFWDDISESAKDFIRHLLERDPQKRFTCQQALRHLWISGDTAFDRDILGSVSEQIRKNFARTHWKRAFNATSFLRHIRKLGQIPEGEGASEQGMARHSHSGLRAGQPPKW.

One can recognise a Protein kinase domain in the interval 15–270 (YEIRERLGSG…CQQALRHLWI (256 aa)). ATP-binding positions include 21-29 (LGSGAFSEV) and Lys-44. Residue Asp-136 is the Proton acceptor of the active site. The interval 290-311 (KNFARTHWKRAFNATSFLRHIR) is calmodulin-binding. The tract at residues 319–343 (GEGASEQGMARHSHSGLRAGQPPKW) is disordered.

It belongs to the protein kinase superfamily. CAMK Ser/Thr protein kinase family. CaMK subfamily. In terms of processing, phosphorylated by CAMKK1.

It localises to the cytoplasm. It is found in the nucleus. It catalyses the reaction L-seryl-[protein] + ATP = O-phospho-L-seryl-[protein] + ADP + H(+). The enzyme catalyses L-threonyl-[protein] + ATP = O-phospho-L-threonyl-[protein] + ADP + H(+). Activated by Ca(2+)/calmodulin. Its function is as follows. Calcium/calmodulin-dependent protein kinase belonging to a proposed calcium-triggered signaling cascade. In vitro phosphorylates CREB1 and SYN1/synapsin I. Phosphorylates and activates CAMK1. In Homo sapiens (Human), this protein is Calcium/calmodulin-dependent protein kinase type 1B (PNCK).